A 257-amino-acid polypeptide reads, in one-letter code: tRNA pseudouridine synthase A (257 aa).

Aspartate 53 (nucleophile) is an active-site residue. Tyrosine 111 serves as a coordination point for substrate.

It belongs to the tRNA pseudouridine synthase TruA family. In terms of assembly, homodimer.

The enzyme catalyses uridine(38/39/40) in tRNA = pseudouridine(38/39/40) in tRNA. Its function is as follows. Formation of pseudouridine at positions 38, 39 and 40 in the anticodon stem and loop of transfer RNAs. The chain is tRNA pseudouridine synthase A from Xanthomonas axonopodis pv. citri (strain 306).